A 246-amino-acid chain; its full sequence is MTDTPADDLKPSFRSDVTVELVKHSAADSDVLWAARVSTAGEQSLDELKKDPERSKGLINYLMRDRHGSPFEHNSMTFFISAPIFVFREFMRHRVGWSYNEESGRYRELEPVFYVPGESRKLVQEGRPGKYVFVEGTQAQQELTGRVMEDSYRQAYEAYQEMLAAGVAREVARAVLPVGLFSSMYATCNARSLMHFLGLRTQHELAKVPSFPQREIEMVGEKMEAEWAKLMPLTYAAFNTNGRVAP.

Residues 17 to 241 (VTVELVKHSA…PLTYAAFNTN (225 aa)) enclose the ThyX domain. FAD contacts are provided by residues Ser-69, 92–94 (RHR), and Glu-101. Residues 89-92 (EFMR), 101-105 (EESGR), and Arg-173 contribute to the dUMP site. A ThyX motif motif is present at residues 92-103 (RHRVGWSYNEES). FAD-binding positions include 189–191 (NAR) and His-195. Arg-200 contacts dUMP. Arg-200 functions as the Involved in ionization of N3 of dUMP, leading to its activation in the catalytic mechanism.

Belongs to the thymidylate synthase ThyX family. In terms of assembly, homotetramer. FAD is required as a cofactor.

It carries out the reaction dUMP + (6R)-5,10-methylene-5,6,7,8-tetrahydrofolate + NADPH + H(+) = dTMP + (6S)-5,6,7,8-tetrahydrofolate + NADP(+). The protein operates within pyrimidine metabolism; dTTP biosynthesis. Functionally, catalyzes the reductive methylation of 2'-deoxyuridine-5'-monophosphate (dUMP) to 2'-deoxythymidine-5'-monophosphate (dTMP) while utilizing 5,10-methylenetetrahydrofolate (mTHF) as the methyl donor, and NADPH and FADH(2) as the reductant. The chain is Flavin-dependent thymidylate synthase from Streptomyces avermitilis (strain ATCC 31267 / DSM 46492 / JCM 5070 / NBRC 14893 / NCIMB 12804 / NRRL 8165 / MA-4680).